A 188-amino-acid polypeptide reads, in one-letter code: Protein CRIPTO3 (188 aa).

An EGF-like domain is found at 78-107 (LNRTCCLNGGTCMLESFCACPPSFYGRNCE). Residue Asn-79 is glycosylated (N-linked (GlcNAc...) asparagine). 6 disulfides stabilise this stretch: Cys-82-Cys-89, Cys-83-Cys-95, Cys-97-Cys-106, Cys-115-Cys-133, Cys-128-Cys-149, and Cys-131-Cys-140.

The protein belongs to the EGF-CFC (Cripto-1/FRL1/Cryptic) family. As to expression, expressed weakly in lung, colon and breast. Expressed also strongly in primary cancer tissues; lung and colon cancers.

It is found in the cell membrane. In terms of biological role, could play a role in the determination of the epiblastic cells that subsequently give rise to the mesoderm. Activates the Nodal-dependent signaling pathway. The protein is Protein CRIPTO3 of Homo sapiens (Human).